The following is a 494-amino-acid chain: Endoglucanase 22 (494 aa).

An N-terminal signal peptide occupies residues 1–21; that stretch reads MKPLVCSFIVILLILLPTTIS. The active-site Nucleophile is aspartate 76. Histidine 413 is a catalytic residue. Asparagine 468 carries an N-linked (GlcNAc...) asparagine glycan. Glutamate 473 is a catalytic residue.

This sequence belongs to the glycosyl hydrolase 9 (cellulase E) family.

Its subcellular location is the secreted. It carries out the reaction Endohydrolysis of (1-&gt;4)-beta-D-glucosidic linkages in cellulose, lichenin and cereal beta-D-glucans.. This is Endoglucanase 22 (GH9B16) from Arabidopsis thaliana (Mouse-ear cress).